The following is a 293-amino-acid chain: MRLVFGEKDAPYEEARVVVLPVPYDLSLSFLPGARRGPEAILLASRELEPFLLELGAAPEEVGIHAAEPVPWVAGMAEESHRLIREEALKHLRAGKWLVALGGDHSVTHPLVQAHREALGEFSLLHVDAHADLYPEWQGSVYSHASPFYRLLTEGFPLVQVGIRAMDRDSLRLARKRGVALFPAHRIHREGLPLDEILEALGKRVYISLDFDALDPSLMPSVGTPLPGGLSYRQVVDLLEAVFREKEVVGMDFVELSPNGQFHAEMTAAQLVYHAIGLKGLQAGWLSREVDHI.

Mn(2+)-binding residues include His-105, Asp-128, His-130, Asp-132, Asp-210, and Asp-212.

The protein belongs to the arginase family. It depends on Mn(2+) as a cofactor.

It carries out the reaction N(1)-(3-aminopropyl)agmatine + H2O = urea + spermidine. The protein operates within amine and polyamine biosynthesis; spermidine biosynthesis. Its function is as follows. Involved in the biosynthesis of polyamines which are thought to support the growth of thermophilic microorganisms under high-temperature conditions. It seems that long-chain and branched-chain of polyamines effectively stabilize DNA and RNA, respectively. Catalyzes the decarboxylation of N1-(3-aminopropyl)agmatine to yield spermidine and urea. Does not act on agmatine. The chain is N(1)-aminopropylagmatine ureohydrolase from Thermus thermophilus (strain ATCC BAA-163 / DSM 7039 / HB27).